The chain runs to 413 residues: uncharacterized protein (413 aa).

12 consecutive transmembrane segments (helical) span residues 42–62 (FLGG…LPVF), 75–95 (LSLS…GPLS), 109–129 (LIAA…VIVF), 133–153 (LTGL…VEEV), 157–179 (SVSF…GRIL), 191–211 (IAFI…LYFL), 238–258 (PTLL…ITIF), 265–285 (LMLS…IIYL), 304–324 (SSIL…TQYN), 326–346 (IFII…SHSI), 362–382 (ATSL…TFGG), and 383–403 (FFWF…ILIF).

This sequence belongs to the major facilitator superfamily.

Its subcellular location is the cell membrane. This is an uncharacterized protein from Buchnera aphidicola subsp. Schizaphis graminum (strain Sg).